We begin with the raw amino-acid sequence, 358 residues long: C-X-C chemokine receptor type 4-B (358 aa).

The interval 1-25 is important for chemokine binding and signaling; it reads MDGFSGGIDINIFDGNSTENGSGDF. Over 1 to 44 the chain is Extracellular; that stretch reads MDGFSGGIDINIFDGNSTENGSGDFEDFIEPCFMQENSDFNRIF. N-linked (GlcNAc...) asparagine glycosylation is found at N16 and N20. 2 disulfide bridges follow: C32/C281 and C113/C190. The helical transmembrane segment at 45 to 67 threads the bilayer; sequence LPTIYSFIFLLGIIGNGLVVVVM. The Cytoplasmic portion of the chain corresponds to 68–81; the sequence is GYQKKSRTMTDKYR. A helical membrane pass occupies residues 82–103; the sequence is LHLSVADLLFVFTLPFWSVDAA. Residues 98–101 are chemokine binding; that stretch reads WSVD. The Extracellular segment spans residues 104 to 114; that stretch reads IGWYFKEFLCK. A helical transmembrane segment spans residues 115–134; the sequence is AVHVIYTVNLYSSVLILAFI. Residues 117 to 121 are chemokine binding; it reads HVIYT. Residues 135–158 lie on the Cytoplasmic side of the membrane; that stretch reads SLDRYLAIVHATNSQGSRKMLADK. An involved in dimerization; when bound to chemokine region spans residues 139 to 151; sequence YLAIVHATNSQGS. The chain crosses the membrane as a helical span at residues 159 to 178; the sequence is VVYAGVWLPALLLTVPDLVF. Topologically, residues 179-202 are extracellular; it reads ASVSNENGQFVCDRIYPIDNRETW. A chemokine binding, important for signaling region spans residues 190–194; it reads CDRIY. The chain crosses the membrane as a helical span at residues 203-223; that stretch reads TVGFRFLHITVGLILPGLIIL. At 224–248 the chain is on the cytoplasmic side; that stretch reads VCYCVIISKLSHSKGHQKRKALKTT. The helical transmembrane segment at 249–268 threads the bilayer; it reads VILILAFFACWLPYYVCLTT. Over 269–289 the chain is Extracellular; it reads DTFMMLGLVKADCIWENTLHK. A helical transmembrane segment spans residues 290 to 309; it reads AISITEALAFFHCCLNPILY. The Cytoplasmic segment spans residues 310–358; the sequence is AFLGAKFKKSAQNAFTSVSRGSSLKILSKKRAGLSSVSTESESSSFHSS. Positions 338–358 are disordered; the sequence is KKRAGLSSVSTESESSSFHSS. Residues 344–358 are compositionally biased toward low complexity; sequence SSVSTESESSSFHSS.

This sequence belongs to the G-protein coupled receptor 1 family. As to quaternary structure, monomer. Can form dimers. In terms of processing, sulfation is required for efficient binding of cxcl12/sdf-1alpha and promotes its dimerization. O- and N-glycosylated.

It localises to the cell membrane. The protein localises to the cytoplasm. Its subcellular location is the nucleus. The protein resides in the early endosome. It is found in the late endosome. It localises to the lysosome. In terms of biological role, receptor for the C-X-C chemokine cxcl12/sdf-1. Transduces a signal by increasing the intracellular level of calcium ions. Signaling with cxcl12/sdf-1 mediates the directional movement of mesodermal cells during gastrulation. May play a role in the migration of embryonic presumptive primordial germ cells (pPGCs). May also be involved in regulating migration of hematopoietic stem cells into the larval liver. This chain is C-X-C chemokine receptor type 4-B (cxcr4-b), found in Xenopus laevis (African clawed frog).